The primary structure comprises 599 residues: Exocyst complex component EXO70B2 (599 aa).

The disordered stretch occupies residues 38 to 58 (GASGNRGGDPRPTPSRGGSNV).

This sequence belongs to the EXO70 family. As to quaternary structure, self interacts. Interacts with EXO70B1. Interacts with the exocyst subunits EXO70H1, SEC5A and SEC15B. Binds to SNAP33. Subunit of the exocyst complex that mediates vesicle tethering during exocytosis. Binds to PUB22. In terms of processing, target of the E3 ubiquitin-protein ligase PUB22 that mediates its ubiquitination and degradation via the 26S proteasome to attenuate pathogen-associated molecular patterns (PAMP)-induced signaling, especially is response to the bacterial elicitor flg22. As to expression, mostly expressed in leaves and, to a lower extent, in roots, cotyledons, internodes, flower buds, siliques and anthers.

Its subcellular location is the cytoplasmic vesicle. It localises to the phagosome. The protein resides in the cytoplasm. The protein localises to the nucleus. Its function is as follows. Component of an exocyst subcomplex specifically involved in autophagy-related, Golgi-independent membrane traffic to the vacuole. Regulates autophagosome formation and autophagy-related Golgi-independent import into the vacuole. Positive regulator of defense responses to pathogenic bacteria (e.g. P.syringae pv. maculicola), to the biotrophic oomycete H.arabidopsidis and to fungi (e.g. B.graminis hordei), especially in cell wall apposition formation related to plant defense. Required for both immediate and later responses triggered by pathogen-associated molecular patterns (PAMPs). Positive regulator of abscisic acid (ABA)-independent mannitol (drought)-promoted stomatal closure. This Arabidopsis thaliana (Mouse-ear cress) protein is Exocyst complex component EXO70B2.